The primary structure comprises 440 residues: 5-hydroxytryptamine receptor 6 (440 aa).

Topologically, residues 1–27 are extracellular; the sequence is MVPEPGPTANSTPAWGAGPPSAPGGSG. A helical transmembrane segment spans residues 28–52; sequence WVAAALCVVIALTAAANSLLIALIC. Residues 53–62 lie on the Cytoplasmic side of the membrane; the sequence is TQPALRNTSN. Residues 63 to 88 form a helical membrane-spanning segment; the sequence is FFLVSLFTSDLMVGLVVMPPAMLNAL. The Extracellular segment spans residues 89–96; sequence YGRWVLAR. A helical membrane pass occupies residues 97 to 122; that stretch reads GLCLLWTAFDVMCCSASILNLCLISL. Cysteines 99 and 180 form a disulfide. Position 106 (aspartate 106) interacts with serotonin. The Cytoplasmic segment spans residues 123 to 142; it reads DRYLLILSPLRYKLRMTPLR. Residues 143-167 form a helical membrane-spanning segment; it reads ALALVLGAWSLAALASFLPLLLGWH. Residues 168–185 are Extracellular-facing; it reads ELGHARPPVPGQCRLLAS. A helical membrane pass occupies residues 186 to 209; the sequence is LPFVLVASGLTFFLPSGAICFTYC. The Cytoplasmic portion of the chain corresponds to 210-266; the sequence is RILLAARKQAVQVASLTTGMASQASETLQVPRTPRPGVESADSRRLATKHSRKALKA. The helical transmembrane segment at 267-293 threads the bilayer; sequence SLTLGILLGMFFVTWLPFFVANIVQAV. A serotonin-binding site is contributed by asparagine 288. Over 294–299 the chain is Extracellular; that stretch reads CDCISP. A helical membrane pass occupies residues 300-323; that stretch reads GLFDVLTWLGYCNSTMNPIIYPLF. At 324 to 440 the chain is on the cytoplasmic side; that stretch reads MRDFKRALGR…RPHPLGIPTN (117 aa). A disordered region spans residues 346-392; that stretch reads ASLASPSLRTSHSGPRPGLSLQQVLPLPLPPDSDSDSDAGSGGSSGL. The segment covering 347–358 has biased composition (polar residues); the sequence is SLASPSLRTSHS. The span at 362 to 371 shows a compositional bias: low complexity; sequence PGLSLQQVLP.

Belongs to the G-protein coupled receptor 1 family. In terms of assembly, interacts with MTOR, RPTOR and NF1. Interacts with CDK5. In terms of tissue distribution, expressed in several human brain regions, most prominently in the caudate nucleus.

The protein localises to the cell membrane. In terms of biological role, G-protein coupled receptor for 5-hydroxytryptamine (serotonin), a biogenic hormone that functions as a neurotransmitter, a hormone and a mitogen. Also has a high affinity for tricyclic psychotropic drugs. Ligand binding causes a conformation change that triggers signaling via guanine nucleotide-binding proteins (G proteins) and modulates the activity of downstream effectors. HTR6 is coupled to G(s) G alpha proteins and mediates activation of adenylate cyclase activity. Controls pyramidal neurons migration during corticogenesis, through the regulation of CDK5 activity. Is an activator of mTOR signaling. This Homo sapiens (Human) protein is 5-hydroxytryptamine receptor 6.